A 120-amino-acid polypeptide reads, in one-letter code: Large ribosomal subunit protein bL19 (120 aa).

The protein belongs to the bacterial ribosomal protein bL19 family.

This protein is located at the 30S-50S ribosomal subunit interface and may play a role in the structure and function of the aminoacyl-tRNA binding site. This is Large ribosomal subunit protein bL19 from Microcystis aeruginosa (strain NIES-843 / IAM M-2473).